We begin with the raw amino-acid sequence, 390 residues long: Multidrug export protein EmrA (390 aa).

Residues 1-24 (MSANAETQTPQQPVKKSGKRKRLL) lie on the Cytoplasmic side of the membrane. Residues 25-45 (LLLTLLFIIIAVAIGIYWFLV) form a helical membrane-spanning segment. Residues 46-390 (LRHFEETDDA…IDDIVKANAG (345 aa)) are Periplasmic-facing. A coiled-coil region spans residues 120–180 (INSKQLQANI…QAQLDVAIQQ (61 aa)).

Belongs to the membrane fusion protein (MFP) (TC 8.A.1) family. As to quaternary structure, homodimer and homotrimer. Part of the tripartite efflux system EmrAB-TolC, which is composed of an inner membrane transporter, EmrB, a periplasmic membrane fusion protein, EmrA, and an outer membrane component, TolC. The complex forms a large protein conduit and can translocate molecules across both the inner and outer membranes. Interacts with EmrB. EmrAB complex forms a dimer in vitro.

The protein resides in the cell inner membrane. Functionally, part of the tripartite efflux system EmrAB-TolC, which confers resistance to antibiotics such as CCCP, FCCP, 2,4-dinitrophenol and nalidixic acid. EmrA is a drug-binding protein that provides a physical link between EmrB and TolC. This chain is Multidrug export protein EmrA (emrA), found in Escherichia coli (strain K12).